Consider the following 958-residue polypeptide: Glycine dehydrogenase (decarboxylating) (958 aa).

An N6-(pyridoxal phosphate)lysine modification is found at Lys708.

This sequence belongs to the GcvP family. As to quaternary structure, the glycine cleavage system is composed of four proteins: P, T, L and H. It depends on pyridoxal 5'-phosphate as a cofactor.

The catalysed reaction is N(6)-[(R)-lipoyl]-L-lysyl-[glycine-cleavage complex H protein] + glycine + H(+) = N(6)-[(R)-S(8)-aminomethyldihydrolipoyl]-L-lysyl-[glycine-cleavage complex H protein] + CO2. The glycine cleavage system catalyzes the degradation of glycine. The P protein binds the alpha-amino group of glycine through its pyridoxal phosphate cofactor; CO(2) is released and the remaining methylamine moiety is then transferred to the lipoamide cofactor of the H protein. The sequence is that of Glycine dehydrogenase (decarboxylating) from Proteus mirabilis (strain HI4320).